An 820-amino-acid polypeptide reads, in one-letter code: Leucine--tRNA ligase (820 aa).

The short motif at 42–52 (PYPSGDLHMGH) is the 'HIGH' region element. Residues 576-580 (KMSKS) carry the 'KMSKS' region motif. Lys-579 serves as a coordination point for ATP.

Belongs to the class-I aminoacyl-tRNA synthetase family.

The protein localises to the cytoplasm. The catalysed reaction is tRNA(Leu) + L-leucine + ATP = L-leucyl-tRNA(Leu) + AMP + diphosphate. This is Leucine--tRNA ligase from Coxiella burnetii (strain CbuK_Q154) (Coxiella burnetii (strain Q154)).